We begin with the raw amino-acid sequence, 75 residues long: Chaplin-D (75 aa).

Residues Met-1–Ala-23 form the signal peptide. A Chaplin domain is found at Ser-34–Asn-74. Residues Cys-54 and Cys-72 are joined by a disulfide bond.

The protein belongs to the chaplin family. Short chaplin subfamily.

It is found in the cell surface. The protein localises to the secreted. The protein resides in the cell wall. It localises to the fimbrium. In terms of biological role, one of 8 partially redundant surface-active proteins required for efficient formation of aerial mycelium; the short chaplins assemble into a hydrophobic, amyloidal fibrillar surface layer that envelopes and protects aerial hyphae and spores, presumably anchored to the long chaplins. Chaplins have an overlapping function with the surface-active SapB peptide; chaplins are essential on minimal medium while on rich medium both chaplins and SapB are required for efficient aerial hyphae formation. Chaplins are also involved in cell attachment to a hydrophobic surface. Forms amyloid fibrils in vitro probably composed of stacked beta-sheets, at low extracellular concentrations individually restores the ability to form aerial hyphae to a chaplin-deficient strain. A small chaplin extract (ChpD, ChpE, ChpF, ChpG and ChpH) self-assembles into 2 different amyloids; small fibrils at the air-water interface form an amphipathic membrane that resembles spore-surface structures involved in aerial hyphae formation, and hydrophilic fibrils in solution that resemble the fibers that attach cells to a hydrophobic surface. At the air-water interface the hydrophilic surface is in contact with water (probably equivalent to the peptidoglycan layer), while the hydrophobic face is exposed to the air, making the surface of the aerial hyphae hydrophobic. A minimal chaplin strain capable of forming aerial mycelium/hyphae on minimal medium contains ChpC, ChpE and ChpH. The strain also has restored rodlet formation on the hyphae surface. A second minimal chaplin strain with ChpA, ChpD and ChpE makes slightly less robust hyphae. A small chaplin extract applied to a chaplin-deficient strain restores aerial hyphae formation. The small chaplin extract forms an amyloid-like structure similar to that seen on the surface of cells without rodlets (rdlA-rdlB deletions), and is highly surface active, reducing surface tension from 72 to 26 mJ/m(2), which probably allows escape of hyphae from an aqueous environment into air. The sequence is that of Chaplin-D from Streptomyces coelicolor (strain ATCC BAA-471 / A3(2) / M145).